Here is a 145-residue protein sequence, read N- to C-terminus: Secreted RxLR effector protein 43 (145 aa).

Residues 1 to 20 (MKVTMALAALCVALQAPCIG) form the signal peptide. Positions 31–34 (RHLR) match the RxLR motif.

This sequence belongs to the RxLR effector family.

It localises to the secreted. Its subcellular location is the host nucleus. The protein resides in the host cytoplasm. Secreted effector that completely suppresses the host cell death induced by cell death-inducing proteins. The chain is Secreted RxLR effector protein 43 from Plasmopara viticola (Downy mildew of grapevine).